We begin with the raw amino-acid sequence, 107 residues long: MMKVLVVVALLVTLISYSSSEGIDDLEADELLSLMANEQTRKECIPKHHECTSNKHGCCRGNFFKYKCQCTTVVTQDGEQTERCFCGTPPHHKAAELMVGFGKKIFG.

Residues 1 to 20 (MMKVLVVVALLVTLISYSSS) form the signal peptide. A propeptide spanning residues 21 to 41 (EGIDDLEADELLSLMANEQTR) is cleaved from the precursor. Intrachain disulfides connect cysteine 44-cysteine 59, cysteine 51-cysteine 68, cysteine 58-cysteine 86, and cysteine 70-cysteine 84.

This sequence belongs to the neurotoxin 19 (CSTX) family. 04 (U1-Lctx) subfamily. Expressed by the venom gland.

It localises to the secreted. The polypeptide is U1-lycotoxin-Ls1e (Lycosa singoriensis (Wolf spider)).